A 109-amino-acid chain; its full sequence is Heterogeneous nuclear ribonucleoprotein-like protein HD40 (109 aa).

The tract at residues 1–36 is disordered; the sequence is EEVSNGQEHTEGMXQGEXNXIXVEEHHEGEKNSHLV. Over residues 23–36 the composition is skewed to basic and acidic residues; it reads VEEHHEGEKNSHLV. Residues 40–50 enclose the RRM domain; the sequence is EEKKLFVGALS. 2 positions are modified to asymmetric dimethylarginine: R102 and R105.

It localises to the cytoplasm. The protein localises to the nucleus. The sequence is that of Heterogeneous nuclear ribonucleoprotein-like protein HD40 from Artemia salina (Brine shrimp).